The following is a 373-amino-acid chain: RNA 3'-terminal phosphate cyclase-like protein (373 aa).

Belongs to the RNA 3'-terminal cyclase family. Type 2 subfamily. In terms of assembly, part of the small subunit (SSU) processome, composed of more than 70 proteins and the RNA chaperone small nucleolar RNA (snoRNA) U3. Interacts with BMS1.

Its subcellular location is the nucleus. The protein localises to the nucleolus. In terms of biological role, as part of the small subunit (SSU) processome, it plays a role in 40S-ribosomal-subunit biogenesis in the early pre-rRNA processing steps at sites A0, A1 and A2 that are required for proper maturation of the 18S RNA. Activates BMS1 by promoting GDP/GTP exchange. Does not have cyclase activity. The sequence is that of RNA 3'-terminal phosphate cyclase-like protein (Rcl1) from Mus musculus (Mouse).